Reading from the N-terminus, the 159-residue chain is Ribosomal RNA large subunit methyltransferase H (159 aa).

S-adenosyl-L-methionine is bound by residues Leu76, Gly108, and 127–132 (LSDMTF).

Belongs to the RNA methyltransferase RlmH family. In terms of assembly, homodimer.

Its subcellular location is the cytoplasm. It carries out the reaction pseudouridine(1915) in 23S rRNA + S-adenosyl-L-methionine = N(3)-methylpseudouridine(1915) in 23S rRNA + S-adenosyl-L-homocysteine + H(+). In terms of biological role, specifically methylates the pseudouridine at position 1915 (m3Psi1915) in 23S rRNA. This Acetivibrio thermocellus (strain ATCC 27405 / DSM 1237 / JCM 9322 / NBRC 103400 / NCIMB 10682 / NRRL B-4536 / VPI 7372) (Clostridium thermocellum) protein is Ribosomal RNA large subunit methyltransferase H.